The primary structure comprises 271 residues: MNEKTESEIFEEQNSLYKPIKQEKKTPSTPESEDKNDQSLANANQSLEAEPPYLSTGIGYLDDKIKNRSITAFDYYMAKKFLGLDLSVNLNGNLNIKSENKTRLASINKATQDIFDDLKALDLGDDLIKKAQEHSGITNQVKLWLNYKTGGLKGVDYDLAKTDNARLSYANRVAKTMAQGGQVTQKLRDEAKALTSWGFRSKEENTARATQTQEILLNSLRKNLQMLESLGGSVSPLMLEKLKEHQGKINYINDTGGKIDLKKYQSLAGGN.

Positions 1 to 39 (MNEKTESEIFEEQNSLYKPIKQEKKTPSTPESEDKNDQS) are disordered. Residues 20 to 37 (IKQEKKTPSTPESEDKND) show a composition bias toward basic and acidic residues. Positions 208 to 228 (RATQTQEILLNSLRKNLQMLE) form a coiled coil.

In Helicobacter pylori (strain 35A), this protein is Coiled-coil domain-containing protein ORF29.